A 412-amino-acid chain; its full sequence is Trehalose synthase (412 aa).

The protein belongs to the glycosyltransferase group 1 family. Glycosyltransferase 4 subfamily. Homodimer. Mg(2+) serves as cofactor.

The catalysed reaction is an NDP-alpha-D-glucose + D-glucose = alpha,alpha-trehalose + a ribonucleoside 5'-diphosphate + H(+). Functionally, synthesizes trehalose from ADP-glucose and glucose. Has a much lower activity toward UDP-glucose and GDP-glucose. The reaction is reversible, the equilibrium strongly favors trehalose synthesis. This chain is Trehalose synthase, found in Pyrococcus furiosus (strain ATCC 43587 / DSM 3638 / JCM 8422 / Vc1).